We begin with the raw amino-acid sequence, 85 residues long: Defensin-like protein 112 (85 aa).

The signal sequence occupies residues 1–24; it reads MAISKKMLTTFVLTILLAVSFVHC. Intrachain disulfides connect Cys40-Cys80, Cys46-Cys71, Cys56-Cys78, and Cys60-Cys79.

It belongs to the DEFL family.

The protein resides in the secreted. This chain is Defensin-like protein 112, found in Arabidopsis thaliana (Mouse-ear cress).